Here is a 483-residue protein sequence, read N- to C-terminus: Spore germination protein B1 (483 aa).

A run of 5 helical transmembrane segments spans residues 289 to 309, 323 to 343, 353 to 373, 375 to 395, and 410 to 430; these read ILIT…HTGL, LNVP…IELI, PIGQ…AVQA, IVSA…FTVP, and VMIS…LFVI.

Belongs to the GerABKA family.

The protein resides in the cell membrane. In terms of biological role, involved in the response to the germinative mixture of L-asparagine, glucose, fructose and potassium ions (AGFK). Cannot stimulate germination in the absence of gerD and gerK gene products (fructose and glucose receptors respectively). This chain is Spore germination protein B1 (gerBA), found in Bacillus subtilis (strain 168).